The primary structure comprises 344 residues: Cysteine proteinase 5 (344 aa).

Positions 1–17 (MKVLSFLCVLLVSVATA) are cleaved as a signal peptide. The propeptide at 18 to 111 (KQQFSELQYR…TQEEKVFTTS (94 aa)) is activation peptide. Cystine bridges form between C133–C174, C167–C207, and C265–C333. Residue C136 is part of the active site. H272 is an active-site residue. Residue N297 is glycosylated (N-linked (GlcNAc...) asparagine). N311 is an active-site residue.

The protein belongs to the peptidase C1 family. Glycosylated; contains GlcNAc-alpha-1-P-Ser residues.

It localises to the lysosome. The chain is Cysteine proteinase 5 (cprE) from Dictyostelium discoideum (Social amoeba).